Reading from the N-terminus, the 392-residue chain is Formate-dependent phosphoribosylglycinamide formyltransferase (392 aa).

N(1)-(5-phospho-beta-D-ribosyl)glycinamide-binding positions include 22–23 (EL) and Glu-82. ATP-binding positions include Arg-114, Lys-155, 160–165 (SSGKGQ), 195–198 (EGVV), and Glu-203. Residues 119–308 (RLAAEELGLP…EFALHVRAFL (190 aa)) form the ATP-grasp domain. Mg(2+) is bound by residues Glu-267 and Glu-279. N(1)-(5-phospho-beta-D-ribosyl)glycinamide-binding positions include Asp-286, Lys-355, and 362–363 (RR).

It belongs to the PurK/PurT family. As to quaternary structure, homodimer.

It carries out the reaction N(1)-(5-phospho-beta-D-ribosyl)glycinamide + formate + ATP = N(2)-formyl-N(1)-(5-phospho-beta-D-ribosyl)glycinamide + ADP + phosphate + H(+). It functions in the pathway purine metabolism; IMP biosynthesis via de novo pathway; N(2)-formyl-N(1)-(5-phospho-D-ribosyl)glycinamide from N(1)-(5-phospho-D-ribosyl)glycinamide (formate route): step 1/1. In terms of biological role, involved in the de novo purine biosynthesis. Catalyzes the transfer of formate to 5-phospho-ribosyl-glycinamide (GAR), producing 5-phospho-ribosyl-N-formylglycinamide (FGAR). Formate is provided by PurU via hydrolysis of 10-formyl-tetrahydrofolate. In Salmonella dublin (strain CT_02021853), this protein is Formate-dependent phosphoribosylglycinamide formyltransferase.